The primary structure comprises 316 residues: Galectin-8 (316 aa).

Galectin domains are found at residues 18-151 and 186-316; these read YVST…IGFR and FEAR…VRSW. Residues Arg-68, Asn-78, and Glu-88 each contribute to the a carbohydrate site. 248 to 254 serves as a coordination point for a beta-D-galactoside; the sequence is WGEEERN.

In terms of assembly, homodimer. Interacts with CALCOCO2/NDP52. Interacts with PDPN; the interaction is glycosylation-dependent; may participate in connection of the lymphatic endothelium to the surrounding extracellular matrix. Expressed in liver, kidney, cardiac muscle, lung, and brain.

It localises to the cytoplasmic vesicle. Its subcellular location is the cytoplasm. The protein resides in the cytosol. Beta-galactoside-binding lectin that acts as a sensor of membrane damage caused by infection and restricts the proliferation of infecting pathogens by targeting them for autophagy. Detects membrane rupture by binding beta-galactoside ligands located on the lumenal side of the endosome membrane; these ligands becoming exposed to the cytoplasm following rupture. Restricts infection by initiating autophagy via interaction with CALCOCO2/NDP52. Required to restrict infection of bacterial invasion such as S.typhimurium. Also required to restrict infection of Picornaviridae viruses. Has a marked preference for 3'-O-sialylated and 3'-O-sulfated glycans. In Rattus norvegicus (Rat), this protein is Galectin-8 (Lgals8).